Reading from the N-terminus, the 409-residue chain is Galactosylgalactosylxylosylprotein 3-beta-glucuronosyltransferase S (409 aa).

The disordered stretch occupies residues methionine 1–valine 45. The Cytoplasmic segment spans residues methionine 1–arginine 53. Residue serine 9 is modified to Phosphoserine. Threonine 11 is modified (phosphothreonine). 2 positions are modified to phosphoserine: serine 12 and serine 32. The chain crosses the membrane as a helical; Signal-anchor for type II membrane protein span at residues isoleucine 54–leucine 73. Residues serine 74–serine 409 are Lumenal-facing. N-linked (GlcNAc...) asparagine glycosylation is found at asparagine 102 and asparagine 223. Mn(2+) is bound at residue aspartate 235. The active-site Proton acceptor is the glutamate 318. An N-linked (GlcNAc...) asparagine glycan is attached at asparagine 338. The tract at residues glutamate 389–serine 409 is disordered. Residues asparagine 398–serine 409 show a composition bias toward basic and acidic residues.

The protein belongs to the glycosyltransferase 43 family. Requires Mn(2+) as cofactor.

The protein localises to the golgi apparatus membrane. It catalyses the reaction 3-O-(beta-D-galactosyl-(1-&gt;3)-beta-D-galactosyl-(1-&gt;4)-beta-D-xylosyl)-L-seryl-[protein] + UDP-alpha-D-glucuronate = 3-O-(beta-D-GlcA-(1-&gt;3)-beta-D-Gal-(1-&gt;3)-beta-D-Gal-(1-&gt;4)-beta-D-Xyl)-L-seryl-[protein] + UDP + H(+). Its pathway is protein modification; protein glycosylation. Functionally, involved in the biosynthesis of L2/HNK-1 carbohydrate epitope on both glycolipids and glycoproteins. Enzyme has a broad specificity. The polypeptide is Galactosylgalactosylxylosylprotein 3-beta-glucuronosyltransferase S (GlcAT-S) (Drosophila melanogaster (Fruit fly)).